Reading from the N-terminus, the 734-residue chain is Paralemmin-3 (734 aa).

A coiled-coil region spans residues 19 to 64 (SALYRQRLEVIAEKRRLQEEIGAARRELEEEKLRVERLKRKSLRER). Disordered regions lie at residues 62-100 (RERWLMDGAAEGPERPEEPASKDPQSPEGQAQARIRNLE) and 114-217 (QSAS…LGVS). Residues 73–82 (GPERPEEPAS) are compositionally biased toward basic and acidic residues. A coiled-coil region spans residues 90-116 (GQAQARIRNLEDSLFSLQSQLQLLQSA). Serine 139, serine 158, serine 167, serine 170, and serine 172 each carry phosphoserine. Positions 186–198 (RPSTEAIGTSSEA) are enriched in polar residues. Serine 270 carries the post-translational modification Phosphoserine. Positions 297–308 (DVTGESGRDAEA) are enriched in basic and acidic residues. 3 disordered regions span residues 297-347 (DVTG…PGVE), 374-400 (PQGAGSAGEPEALIGAQPRGGEASWEV), and 413-709 (EKGR…YAPA). Threonine 311 carries the phosphothreonine modification. Over residues 315-336 (RLQEQFEAETCRKEEGASRDSL) the composition is skewed to basic and acidic residues. Phosphoserine occurs at positions 332 and 335. Composition is skewed to basic and acidic residues over residues 413–427 (EKGRAEKLGAEREDG), 435–452 (TQGREENEAEKVERKDSE), 462–484 (DEEKWEVKTTEGEESLEVEKGGE), 494–531 (LVTEKKPEGSLETERKGSEMPLDQEKDGEGSLDRESKT), 540–561 (IGDKSSLDETKGSKKLLDEKTG), 571–582 (EGSKKLLDREAD), 589–607 (EVDKTSGAKDDVSPEEQGK), and 630–647 (DEPRSEEQGQQEPEKQEG). At serine 451 the chain carries Phosphoserine. Serine 601 bears the Phosphoserine mark. Serine 721 carries the phosphoserine modification. S-palmitoyl cysteine attachment occurs at residues cysteine 728 and cysteine 730. At cysteine 731 the chain carries Cysteine methyl ester. Cysteine 731 is lipidated: S-farnesyl cysteine. Positions 732-734 (VVM) are cleaved as a propeptide — removed in mature form.

This sequence belongs to the paralemmin family. In terms of assembly, interacts with SIGIRR. In terms of processing, palmitoylated on Cys-728 and Cys-730 and prenylated on Cys-731; which is required for membrane association.

It is found in the cytoplasm. The protein resides in the cell membrane. Functionally, ATP-binding protein, which may act as a adapter in the Toll-like receptor (TLR) signaling. The polypeptide is Paralemmin-3 (Palm3) (Mus musculus (Mouse)).